Consider the following 282-residue polypeptide: HTH-type transcriptional activator RhaR (282 aa).

The 99-residue stretch at 179–277 (DKLITALANS…GMTPSQWRHL (99 aa)) folds into the HTH araC/xylS-type domain. 2 DNA-binding regions (H-T-H motif) span residues 196–217 (DAFC…RAQT) and 244–267 (ISEI…TRET).

As to quaternary structure, binds DNA as a dimer.

It localises to the cytoplasm. In terms of biological role, activates expression of the rhaSR operon in response to L-rhamnose. This Salmonella schwarzengrund (strain CVM19633) protein is HTH-type transcriptional activator RhaR.